A 358-amino-acid polypeptide reads, in one-letter code: Glutamate--cysteine ligase (358 aa).

It belongs to the glutamate--cysteine ligase type 2 family. YbdK subfamily.

It catalyses the reaction L-cysteine + L-glutamate + ATP = gamma-L-glutamyl-L-cysteine + ADP + phosphate + H(+). Its function is as follows. Catalyzes the synthesis of gamma-glutamylcysteine (gamma-GC), the main low-molecular-weight thiol compound instead of glutathione in halophilic archaea. In Haloferax volcanii (strain ATCC 29605 / DSM 3757 / JCM 8879 / NBRC 14742 / NCIMB 2012 / VKM B-1768 / DS2) (Halobacterium volcanii), this protein is Glutamate--cysteine ligase.